The following is a 278-amino-acid chain: Tyrosine-protein phosphatase pmp1 (278 aa).

The 155-residue stretch at 60 to 214 folds into the Tyrosine-protein phosphatase domain; it reads GPVCIYPPNI…LSEYQQIIRK (155 aa). Catalysis depends on Cys-158, which acts as the Phosphocysteine intermediate. A disordered region spans residues 217–278; sequence SQGPYQSSSL…SSGSISNDAS (62 aa). The span at 252–278 shows a compositional bias: polar residues; the sequence is SPSTSESSMFTNLRRTRSSGSISNDAS.

This sequence belongs to the protein-tyrosine phosphatase family. Non-receptor class dual specificity subfamily.

The catalysed reaction is O-phospho-L-tyrosyl-[protein] + H2O = L-tyrosyl-[protein] + phosphate. In terms of biological role, dual specificity phosphatase that dephosphorylates MAP kinase pmk1 on a Tyr. Has a role in chloride ion homeostasis by inactivating this pmk1 MAP kinase pathway. The polypeptide is Tyrosine-protein phosphatase pmp1 (pmp1) (Schizosaccharomyces pombe (strain 972 / ATCC 24843) (Fission yeast)).